The primary structure comprises 360 residues: Peptide chain release factor 1 (360 aa).

Gln-237 is modified (N5-methylglutamine).

This sequence belongs to the prokaryotic/mitochondrial release factor family. In terms of processing, methylated by PrmC. Methylation increases the termination efficiency of RF1.

The protein resides in the cytoplasm. Peptide chain release factor 1 directs the termination of translation in response to the peptide chain termination codons UAG and UAA. The polypeptide is Peptide chain release factor 1 (Saccharophagus degradans (strain 2-40 / ATCC 43961 / DSM 17024)).